We begin with the raw amino-acid sequence, 463 residues long: 4-hydroxybenzoate polyprenyltransferase, mitochondrial (463 aa).

Disordered stretches follow at residues 28 to 48 and 133 to 152; these read NNNTNNNNNNNGINKYNSTFN and LLDDNNSNSNNNNNSNNNKP. Residues 137–150 show a composition bias toward low complexity; that stretch reads NNSNSNNNNNSNNN. The next 7 membrane-spanning stretches (helical) occupy residues 181-201, 206-226, 257-277, 305-325, 330-350, 375-395, and 431-451; these read IGVWLLLYPCCWSISLAAPAG, LKTMLVFGIGAYVMRSAGCVI, LIFLGGQLLASFGLILSSLNY, FVLGLAFNWGALAGYSAIAGS, IVAPLYLAGISWTMVYDTIYA, IILSVFSGLVISGMFLTGIAA, and FISNKNFGLYFLLIIIVSKLL.

This sequence belongs to the UbiA prenyltransferase family. Mg(2+) serves as cofactor.

Its subcellular location is the mitochondrion inner membrane. The catalysed reaction is an all-trans-polyprenyl diphosphate + 4-hydroxybenzoate = a 4-hydroxy-3-(all-trans-polyprenyl)benzoate + diphosphate. The protein operates within cofactor biosynthesis; ubiquinone biosynthesis. Functionally, catalyzes the prenylation of para-hydroxybenzoate (PHB) with an all-trans polyprenyl group. Mediates the second step in the final reaction sequence of coenzyme Q (CoQ) biosynthesis, which is the condensation of the polyisoprenoid side chain with PHB. In terms of biological role, catalyzes the prenylation of para-hydroxybenzoate (PHB) with an all-trans polyprenyl group. Mediates the second step in the final reaction sequence of coenzyme Q (CoQ) biosynthesis, which is the condensation of the polyisoprenoid side chain with PHB, generating the first membrane-bound Q intermediate. The sequence is that of 4-hydroxybenzoate polyprenyltransferase, mitochondrial from Dictyostelium discoideum (Social amoeba).